Consider the following 137-residue polypeptide: Putative pre-16S rRNA nuclease (137 aa).

Belongs to the YqgF nuclease family.

The protein localises to the cytoplasm. Functionally, could be a nuclease involved in processing of the 5'-end of pre-16S rRNA. The chain is Putative pre-16S rRNA nuclease from Bacillus cereus (strain AH187).